A 676-amino-acid polypeptide reads, in one-letter code: Protein TAPT1 homolog (676 aa).

Residues 1-44 (MNATLNSAGGKRQLRFRGDVTGSRVEELHHQQQEEQKQKAPLAQ) are disordered. Residues 24 to 38 (RVEELHHQQQEEQKQ) show a composition bias toward basic and acidic residues. The next 6 helical transmembrane spans lie at 128-148 (SFLYIHTFLPVRFVMAVWALV), 170-190 (EICDLLKGVIWMTVTLIMLLV), 249-269 (VLTHVLFTLIYVFLHSGLIMF), 346-366 (FCVMLPDCFAVLFTEILIDWV), 414-434 (GFIPFPLAVVLIKAIYTAVSF), and 437-457 (LAAWLLFLLAYLFAMGLRICL). Positions 625–676 (SGDGVTSAKAKKATQRLPKRTHKRSESEPGMPSMVEKGGAAGIAGGNQTTQL) are disordered. Basic residues predominate over residues 633-647 (KAKKATQRLPKRTHK).

Belongs to the TAPT1 family.

The protein resides in the membrane. The polypeptide is Protein TAPT1 homolog (Drosophila melanogaster (Fruit fly)).